A 688-amino-acid chain; its full sequence is Thyroid hormone-induced protein B (688 aa).

The N-terminal stretch at 1-20 (MMLSHWVLLLSLGAVWLAEG) is a signal peptide. 4 consecutive MAM domains span residues 26–169 (GSCT…GYCI), 170–330 (ECDF…SCSG), 341–500 (AGCD…SCKI), and 509–669 (GKCT…PCND). N-linked (GlcNAc...) asparagine glycosylation is found at Asn-32 and Asn-135. Residues Asn-358 and Asn-668 are each glycosylated (N-linked (GlcNAc...) asparagine).

The protein localises to the membrane. It is found in the secreted. It localises to the extracellular space. The protein is Thyroid hormone-induced protein B of Xenopus laevis (African clawed frog).